We begin with the raw amino-acid sequence, 706 residues long: Transferrin-binding protein B (706 aa).

A signal peptide spans M1–A20. Residue C21 is the site of N-palmitoyl cysteine attachment. C21 is lipidated: S-diacylglycerol cysteine. 2 disordered regions span residues G26–V92 and G384–G412. Residues G42–G51 are compositionally biased toward gly residues. A compositionally biased stretch (basic and acidic residues) spans S389 to E410.

Belongs to the TbpB family.

It localises to the cell outer membrane. The protein resides in the cell surface. In terms of biological role, moraxella acquires iron by extracting it from serum transferrin (TF) in its human host. Acts as a transferrin receptor and is required for transferrin utilization. The chain is Transferrin-binding protein B from Moraxella catarrhalis (Branhamella catarrhalis).